A 672-amino-acid chain; its full sequence is Leucine-rich repeat receptor-like protein kinase PXC1 (672 aa).

A signal peptide spans 1–21; the sequence is MAAKPLLLPLLLLLHLSITLA. At 22–269 the chain is on the extracellular side; it reads QNDTNALTLF…IHSHRGIKPG (248 aa). Residues Asn-23, Asn-44, and Asn-101 are each glycosylated (N-linked (GlcNAc...) asparagine). The LRR 1 repeat unit spans residues 87 to 110; sequence LDQLRLLDLHDNRLNGTVSPLTNC. Residue Lys-111 forms a Glycyl lysine isopeptide (Lys-Gly) (interchain with G-Cter in ubiquitin) linkage. LRR repeat units follow at residues 112 to 134, 135 to 158, 160 to 181, and 182 to 205; these read NLRLVYLAGNDLSGEIPKEISFL, KRMIRLDLSDNNIRGVIPREILGF, RVLTIRIQNNELTGRIPDFSQM, and KSLLELNVSFNELHGNVSDGVVKK. N-linked (GlcNAc...) asparagine glycans are attached at residues Asn-188 and Asn-197. Over residues 233 to 249 the composition is skewed to polar residues; the sequence is ESSNTDQIVPSNPTSIP. A disordered region spans residues 233-254; sequence ESSNTDQIVPSNPTSIPHSPVS. The helical transmembrane segment at 270–290 threads the bilayer; that stretch reads IIAAVIGGCVAVIVLVSFGFA. The Cytoplasmic segment spans residues 291-672; sequence FCCGRLDRNG…MSPSLATTDG (382 aa). Positions 300–333 are disordered; it reads GERSKSGSVETGFVGGGEGKRRSSYGEGGESDAT. The Protein kinase domain occupies 357–645; sequence KASAEMLGKG…AEVVKMVEEI (289 aa). Residues 363 to 371 and Lys-386 contribute to the ATP site; that span reads LGKGSLGTV. The segment at 650-672 is disordered; it reads SPVGEDFDESRNSMSPSLATTDG. Residues 661–672 are compositionally biased toward polar residues; that stretch reads NSMSPSLATTDG.

This sequence belongs to the protein kinase superfamily. Ser/Thr protein kinase family. In terms of tissue distribution, expressed in the vascular strands of cotyledons, the shoot apex, hypocotyls, roots, leaves, stems and flowers.

The protein resides in the cell membrane. Leucine-rich repeat receptor-like protein kinase involved in secondary cell wall formation in xylem fibers. May play a role in a regulatory network which also incorporates the TDR/PXY signaling pathway and regulates the maturation of interfascicular fiber cells. May promote the initiation of secondary cell wall deposition during the procedure of cell expansion. The sequence is that of Leucine-rich repeat receptor-like protein kinase PXC1 from Arabidopsis thaliana (Mouse-ear cress).